We begin with the raw amino-acid sequence, 157 residues long: Large ribosomal subunit protein bL34c (157 aa).

Residues 1-97 constitute a chloroplast transit peptide; that stretch reads MASLSTSVVA…GQRRRGLVVR (97 aa).

It belongs to the bacterial ribosomal protein bL34 family. In terms of assembly, part of the 50S ribosomal subunit.

It is found in the plastid. It localises to the chloroplast. This protein binds directly to 23S ribosomal RNA. This Arabidopsis thaliana (Mouse-ear cress) protein is Large ribosomal subunit protein bL34c (RPL34).